We begin with the raw amino-acid sequence, 224 residues long: 7-cyano-7-deazaguanine synthase (224 aa).

8-18 (LSGGMDSAAVI) contacts ATP. C186, C196, C199, and C202 together coordinate Zn(2+).

The protein belongs to the QueC family. Zn(2+) serves as cofactor.

The enzyme catalyses 7-carboxy-7-deazaguanine + NH4(+) + ATP = 7-cyano-7-deazaguanine + ADP + phosphate + H2O + H(+). It participates in purine metabolism; 7-cyano-7-deazaguanine biosynthesis. Functionally, catalyzes the ATP-dependent conversion of 7-carboxy-7-deazaguanine (CDG) to 7-cyano-7-deazaguanine (preQ(0)). The chain is 7-cyano-7-deazaguanine synthase from Xanthomonas oryzae pv. oryzae (strain MAFF 311018).